The primary structure comprises 292 residues: Poly(U)-specific endoribonuclease-A (292 aa).

An EndoU domain is found at 8–285; that stretch reads LNHELSKLFN…IGTAYPVLLS (278 aa). Catalysis depends on residues His162, His178, and Lys224.

It belongs to the ENDOU family. As to quaternary structure, monomer. Mn(2+) serves as cofactor.

It localises to the nucleus. It catalyses the reaction uridylyl-uridylyl-ribonucleotide-RNA = a 3'-end uridylyl-2',3'-cyclophospho-uridine-RNA + a 5'-end dephospho-ribonucleoside-RNA. Its function is as follows. Poly(U)-specific endoribonuclease involved in the processing of intron-encoded box C/D snoRNAs, such as U16 and U86. Releases products that have 2',3'-cyclic phosphate termini at the 3'-end. This chain is Poly(U)-specific endoribonuclease-A (endou-a), found in Xenopus laevis (African clawed frog).